Reading from the N-terminus, the 104-residue chain is N(4)-acetylcytidine amidohydrolase (104 aa).

Positions 6-96 (ITFYQRFEAD…TIYPNEHESW (91 aa)) constitute an ASCH domain. Lys21 serves as the catalytic Proton acceptor. Thr24 serves as the catalytic Nucleophile. The active-site Proton donor is the Glu74.

The protein belongs to the N(4)-acetylcytidine amidohydrolase family.

It catalyses the reaction N(4)-acetylcytidine + H2O = cytidine + acetate + H(+). The catalysed reaction is N(4)-acetyl-2'-deoxycytidine + H2O = 2'-deoxycytidine + acetate + H(+). It carries out the reaction N(4)-acetylcytosine + H2O = cytosine + acetate + H(+). Catalyzes the hydrolysis of N(4)-acetylcytidine (ac4C). The chain is N(4)-acetylcytidine amidohydrolase from Haemophilus influenzae (strain 86-028NP).